The primary structure comprises 227 residues: Ribonuclease 3 (227 aa).

One can recognise an RNase III domain in the interval 4–126 (LDRLERKIGY…IIGAMSLDQG (123 aa)). Glu39 contacts Mg(2+). Residue Asp43 is part of the active site. Residues Asp112 and Glu115 each coordinate Mg(2+). Glu115 is an active-site residue. The DRBM domain maps to 153–226 (DAKTRLQEYL…AEQILKELDI (74 aa)).

Belongs to the ribonuclease III family. As to quaternary structure, homodimer. Mg(2+) serves as cofactor.

It localises to the cytoplasm. It carries out the reaction Endonucleolytic cleavage to 5'-phosphomonoester.. Digests double-stranded RNA. Involved in the processing of primary rRNA transcript to yield the immediate precursors to the large and small rRNAs (23S and 16S). Processes some mRNAs, and tRNAs when they are encoded in the rRNA operon. Processes pre-crRNA and tracrRNA of type II CRISPR loci if present in the organism. This Haemophilus influenzae (strain 86-028NP) protein is Ribonuclease 3.